Reading from the N-terminus, the 372-residue chain is Embryonic growth/differentiation factor 1 (372 aa).

The first 29 residues, 1 to 29 (MPPPQQGPCGHHLLLLLALLLPSLPLTRA), serve as a signal peptide directing secretion. Positions 30-253 (PVPPGPAAAL…LCHPLARPRR (224 aa)) are excised as a propeptide. Residues 67–86 (RRRDPQETRSGSRRTSPGVT) are disordered. N-linked (GlcNAc...) asparagine glycosylation is present at Asn206. 3 disulfides stabilise this stretch: Cys267–Cys337, Cys296–Cys369, and Cys300–Cys371.

Belongs to the TGF-beta family. In terms of assembly, homodimer; disulfide-linked. Expressed in the brain.

The protein resides in the secreted. In terms of biological role, may mediate cell differentiation events during embryonic development. The protein is Embryonic growth/differentiation factor 1 (GDF1) of Homo sapiens (Human).